Consider the following 315-residue polypeptide: Biotin synthase (315 aa).

Positions 39-266 constitute a Radical SAM core domain; it reads NSLQFATLLS…KSAIRLTAGR (228 aa). [4Fe-4S] cluster contacts are provided by C54, C58, and C61. [2Fe-2S] cluster-binding residues include C98, C129, C189, and R261.

The protein belongs to the radical SAM superfamily. Biotin synthase family. As to quaternary structure, homodimer. [4Fe-4S] cluster is required as a cofactor. Requires [2Fe-2S] cluster as cofactor.

It catalyses the reaction (4R,5S)-dethiobiotin + (sulfur carrier)-SH + 2 reduced [2Fe-2S]-[ferredoxin] + 2 S-adenosyl-L-methionine = (sulfur carrier)-H + biotin + 2 5'-deoxyadenosine + 2 L-methionine + 2 oxidized [2Fe-2S]-[ferredoxin]. It participates in cofactor biosynthesis; biotin biosynthesis; biotin from 7,8-diaminononanoate: step 2/2. Catalyzes the conversion of dethiobiotin (DTB) to biotin by the insertion of a sulfur atom into dethiobiotin via a radical-based mechanism. In Legionella pneumophila (strain Paris), this protein is Biotin synthase.